The primary structure comprises 459 residues: tRNA modification GTPase MnmE (459 aa).

3 residues coordinate (6S)-5-formyl-5,6,7,8-tetrahydrofolate: Arg29, Glu91, and Arg130. The region spanning 225–381 is the TrmE-type G domain; the sequence is GVKVAIVGRP…LEEALEQLVT (157 aa). A K(+)-binding site is contributed by Asn235. Residues 235-240, 254-260, and 279-282 each bind GTP; these read NVGKSS, TDLPGTT, and DTAG. A Mg(2+)-binding site is contributed by Ser239. Residues Thr254, Leu256, and Thr259 each coordinate K(+). Residue Thr260 participates in Mg(2+) binding. Lys459 is a (6S)-5-formyl-5,6,7,8-tetrahydrofolate binding site.

This sequence belongs to the TRAFAC class TrmE-Era-EngA-EngB-Septin-like GTPase superfamily. TrmE GTPase family. Homodimer. Heterotetramer of two MnmE and two MnmG subunits. Requires K(+) as cofactor.

It localises to the cytoplasm. In terms of biological role, exhibits a very high intrinsic GTPase hydrolysis rate. Involved in the addition of a carboxymethylaminomethyl (cmnm) group at the wobble position (U34) of certain tRNAs, forming tRNA-cmnm(5)s(2)U34. The chain is tRNA modification GTPase MnmE from Synechococcus sp. (strain JA-2-3B'a(2-13)) (Cyanobacteria bacterium Yellowstone B-Prime).